The primary structure comprises 166 residues: Large ribosomal subunit protein mL49 (166 aa).

Belongs to the mitochondrion-specific ribosomal protein mL49 family. Component of the mitochondrial ribosome large subunit (39S) which comprises a 16S rRNA and about 50 distinct proteins. Interacts with OXA1L.

The protein localises to the mitochondrion. The protein is Large ribosomal subunit protein mL49 (MRPL49) of Bos taurus (Bovine).